A 352-amino-acid chain; its full sequence is Putative killer cell immunoglobulin-like receptor-like protein KIR3DX1 (352 aa).

An N-terminal signal peptide occupies residues 1-16 (MAPKLITVLCLGFCLN). Ig-like C2-type domains are found at residues 17-112 (QKIC…NSLK) and 224-311 (PSLS…VTRC). 2 disulfides stabilise this stretch: Cys-49/Cys-94 and Cys-244/Cys-295. N-linked (GlcNAc...) asparagine glycosylation occurs at Asn-78.

In terms of tissue distribution, expressed in NK-cells.

It is found in the secreted. The chain is Putative killer cell immunoglobulin-like receptor-like protein KIR3DX1 (KIR3DX1) from Homo sapiens (Human).